A 320-amino-acid polypeptide reads, in one-letter code: Mitochondrial fission regulator 1-like-B (320 aa).

The interval 1–37 (MASLGAAAEPERSLFGKDGAEACESPEGRRSGRRKRT) is disordered. The span at 9-30 (EPERSLFGKDGAEACESPEGRR) shows a compositional bias: basic and acidic residues.

This sequence belongs to the MTFR1 family.

The protein resides in the mitochondrion outer membrane. In terms of biological role, mitochondrial protein required for adaptation of miochondrial dynamics to metabolic changes. Regulates mitochondrial morphology at steady state and mediates AMPK-dependent stress-induced mitochondrial fragmentation via the control of OPA1 levels. The protein is Mitochondrial fission regulator 1-like-B (mtfr1l-b) of Xenopus laevis (African clawed frog).